We begin with the raw amino-acid sequence, 301 residues long: Helicase VP6-A (301 aa).

2 disordered regions span residues 1 to 99 (MIDW…TTGT) and 163 to 208 (RRKE…TSVG). Basic and acidic residues-rich tracts occupy residues 8–30 (ESGK…KDGE), 37–55 (GQKK…DRRV), and 67–81 (GFRE…RGDG). Lys82 is a binding site for ATP. Composition is skewed to basic and acidic residues over residues 163–177 (RRKE…VAEK) and 186–202 (VHGD…KTPE).

This sequence belongs to the orbivirus VP6 family. Homohexamer.

It is found in the virion. It carries out the reaction ATP + H2O = ADP + phosphate + H(+). Functionally, ATP dependent RNA helicase essential for RNA packaging and viral transcription. Possesses ss- and dsRNA-binding capacity. In Bluetongue virus 2 (isolate USA) (BTV 2), this protein is Helicase VP6-A (Segment-9).